Here is a 2153-residue protein sequence, read N- to C-terminus: RNA-directed RNA polymerase L (2153 aa).

Mn(2+) is bound by residues His36, Glu54, Asp97, Glu110, and Val111. The active-site For endonuclease activity is the Lys124. The 187-residue stretch at Thr957 to Met1143 folds into the RdRp catalytic domain. Asp1100 provides a ligand contact to Mg(2+).

It belongs to the Bunyavirales RNA polymerase family. In terms of assembly, interacts with the viral nucleoprotein. Requires Mn(2+) as cofactor. It depends on Mg(2+) as a cofactor.

The protein resides in the host cytoplasm. Its subcellular location is the host perinuclear region. It carries out the reaction RNA(n) + a ribonucleoside 5'-triphosphate = RNA(n+1) + diphosphate. Functionally, RNA-dependent RNA polymerase, which is responsible for the replication and transcription of the viral RNA genome using antigenomic RNA as an intermediate. During transcription, synthesizes subgenomic RNAs and assures their capping by a cap-snatching mechanism, which involves the endonuclease activity cleaving the host capped pre-mRNAs. These short capped RNAs are then used as primers for viral transcription. Cleaves ssRNA substrates but not DNA. Seems to downregulate the expression of its own and heterologous mRNAs through its endonuclease activity. The protein is RNA-directed RNA polymerase L of Black Creek Canal orthohantavirus (BCCV).